The sequence spans 210 residues: MMKMEVVFVFLMLLGTINCQKLILTGRPFLHHQGIINQVSTVTKVIHHELEVAASADDIWTVYSWPGLAKHLPDLLPGAFEKLEIIGDGGVGTILDMTFVPGEFPHEYKEKFILVDNEHRLKKVQMIEGGYLDLGVTYYMDTIHVVPTGKDSCVIKSSTEYHVKPEFVKIVEPLITTGPLAAMADAISKLVLEHKSKSNSDEIEAAIITV.

Positions M1 to C19 are cleaved as a signal peptide. Y108–E110 contacts dopamine. Catalysis depends on K122, which acts as the Proton donor. D141 serves as a coordination point for (4-hydroxyphenyl)acetaldehyde.

The protein belongs to the BetVI family. As to quaternary structure, concentration-dependent dimerization, but mainly monomeric at concentrations around 10 uM. In terms of tissue distribution, expressed most abundantly in the rhizomes and to a lesser extent in petioles, roots, leaves and flower buds.

The catalysed reaction is (4-hydroxyphenyl)acetaldehyde + dopamine = (S)-norcoclaurine + H2O. In terms of biological role, involved in the biosynthesis of the common precursor of all benzylisoquinoline alkaloids such as morphine, sanguinarine, codeine or berberine. Condenses dopamine and 4-hydroxyphenylacetaldehyde. The protein is S-norcoclaurine synthase of Thalictrum flavum subsp. glaucum (Yellow meadow rue).